A 1351-amino-acid polypeptide reads, in one-letter code: Transcriptional regulator ovo (1351 aa).

The interval 1–31 is required for Ubr3 binding and tal-dependent proteolytic processing; it reads MPKIFLIKNRLHQQQQRLLESQNLLQHKNQD. 10 disordered regions span residues 22–77, 100–119, 184–397, 447–554, 640–665, 778–807, 834–887, 916–1000, 1023–1044, and 1113–1192; these read QNLL…SDQQ, LDHL…NPNQ, NSPI…SDEE, AGHG…HFNA, SNSK…GQTS, DDEE…PVEQ, GSNQ…YQHA, LLSQ…PSPT, PMSS…GSSN, and SKHG…DSSS. Positions 49-60 are enriched in pro residues; sequence SPTPTSQPPPEP. 2 stretches are compositionally biased toward low complexity: residues 61–72 and 104–119; these read QGQGQQVLGQVP and NQNQ…NPNQ. The span at 205 to 232 shows a compositional bias: basic and acidic residues; it reads EKEKPAEREREKSDERTEQVEKEERVER. A compositionally biased stretch (acidic residues) spans 233 to 242; the sequence is EEEEDDEVDV. Basic and acidic residues predominate over residues 262–272; that stretch reads QRKEYPQEPKD. A compositionally biased stretch (pro residues) spans 324–340; sequence TPPPADQRPSPPPPRDP. Positions 447–486 are enriched in low complexity; that stretch reads AGHGRNSSSSSGAAGQGFQSSGFGSQNSGSGSSSGNQNAG. Residues 487 to 505 are compositionally biased toward gly residues; it reads SGAGSPGSGAGGGGGMGGG. The span at 530–552 shows a compositional bias: polar residues; it reads KSGQQSTASNNTGQSPGANHSHF. Residues 644-653 are compositionally biased toward basic residues; it reads FHNHHHHHQH. The span at 793–807 shows a compositional bias: polar residues; it reads STPSLTPDSVTPVEQ. 5 stretches are compositionally biased toward low complexity: residues 835 to 878, 916 to 962, 970 to 979, 1025 to 1044, and 1121 to 1175; these read SNQQ…HVQQ, LLSQ…QQQQ, QQQQQPQPQS, SSSS…GSSN, and HQQQ…HGSA. 4 consecutive C2H2-type zinc fingers follow at residues 1197 to 1219, 1225 to 1247, 1253 to 1276, and 1292 to 1315; these read FVCR…MKCH, YLCT…TRTH, YKCN…QKVH, and YVCE…KNNH.

Interacts (via N-terminus) with Ubr3; the interaction is mediated by tal. Post-translationally, N-terminus is proteolytically cleaved and ubiquitinated via a tal-dependent mechanism, leading to the proteolytic degradation of the N-terminus and the production of transcriptional activator shavenbaby, a truncated form with transcriptional activator activity.

It is found in the cytoplasm. The protein localises to the nucleus. It localises to the nucleoplasm. Its function is as follows. Transcriptional regulator with essential functions in the germline and soma. Plays an essential role in regulating the formation of apical cell extensions such as denticles and aristae, and initiating cytoskeletal remodeling during epidermal differentiation. In terms of biological role, transcriptional repressor which functions in postembryonic development. The full-length unprocessed form acts as a transcriptional repressor (Transcriptional repressor svb). Transcriptional activator which initiates trichome development and also promotes tarsal joint development. Has an essential somatic role regulating the tal-dependent formation of trichomes, and initiating cytoskeletal remodeling during epidermal differentiation. Function with SoxN is required for correct denticle morphogenesis on the embryonic epidermis. SoxN and svb appear to act both independently and in conjunction with each other to activate certain genes involved in denticle morphogenesis; Svb appears to be involved in regulating denticle length whereas SoxN regulates the denticle base circumference. Also functions in the development of other apical cell extensions such as bristles. Also has an important role in tarsal joint development, repressing expression of the N ligand Dl and defining its signaling boundary. Functionally, transcriptional repressor which is specifically involved in female germline development, where it functions antagonistically to isoform D. Negatively regulates expression of otu and may also have autoregulatory activity. Negatively regulates expression of piwi in the primordial germ cells (PGCs). Its function is as follows. Transcriptional activator which is specifically involved in female germline development, where it functions antagonistically to isoform C. Necessary and sufficient for normal oogenesis. Required in the primordial germ cells (PGCs) for normal development of male and female germline cells. Plays a role in germline sex determination. Binds the promoter DNA and positively regulates the transcription of the otu gene in a stage-specific manner. May have autoregulatory activity. This chain is Transcriptional regulator ovo, found in Drosophila melanogaster (Fruit fly).